A 538-amino-acid polypeptide reads, in one-letter code: Syncytin-2 (538 aa).

The N-terminal stretch at 1–15 is a signal peptide; sequence MGLLLLVLILTPLLA. Residues 16-478 are Extracellular-facing; sequence AHRHPDFPLL…GWLNWEGTWK (463 aa). A CXXC motif is present at residues 43–46; that stretch reads CWLC. 3 cysteine pairs are disulfide-bonded: Cys-43–Cys-46, Cys-43–Cys-439, and Cys-431–Cys-438. N-linked (GlcNAc...) asparagine glycosylation is found at Asn-133, Asn-146, Asn-177, Asn-220, Asn-241, Asn-247, Asn-312, and Asn-332. A fusion peptide region spans residues 354–374; it reads FIPLLAGLGIIAGTGTGIAGI. The CKS-17 motif lies at 414–430; sequence LQNRRGLDMLTAAQGGI. Residues 431-439 carry the CX6CC motif; the sequence is CLALDEKCC. An N-linked (GlcNAc...) asparagine glycan is attached at Asn-443. Residues 479–499 form a helical membrane-spanning segment; it reads WFSWVLPFTGPLVSLLLLLLF. The Cytoplasmic segment spans residues 500-538; that stretch reads GPCLLNLITQFVLSRLQAIKLQTNLSAGCRPHNIQESPF.

Belongs to the gamma type-C retroviral envelope protein family. HERV class-I FRD env subfamily. In terms of assembly, the surface and transmembrane proteins form a heterodimer. They are attached by non-covalent interactions or by a labile interchain disulfide bond. In terms of processing, specific enzymatic cleavages in vivo yield the mature SU and TM proteins. The CXXC motif is highly conserved across a broad range of retroviral envelope proteins. It is thought to participate in the formation of a labile disulfide bond possibly with the CX6CC motif present in the transmembrane protein.

The protein localises to the virion. It localises to the cell membrane. Functionally, this endogenous retroviral envelope protein has retained its original fusogenic properties and participates in trophoblast fusion and the formation of a syncytium during placenta morphogenesis. The interaction with MFSD2A is apparently important for this process. Its function is as follows. Endogenous envelope proteins may have kept, lost or modified their original function during evolution but this one can still make pseudotypes with MLV, HIV-1 or SIV-1 virions and confer infectivity. Retroviral envelope proteins mediate receptor recognition and membrane fusion during early infection. The surface protein mediates receptor recognition, while the transmembrane protein anchors the envelope heterodimer to the viral membrane through one transmembrane domain. The other hydrophobic domain, called fusion peptide, mediates fusion of the viral membrane with the target cell membrane. The protein is Syncytin-2 (ERVFRD-1) of Pongo pygmaeus (Bornean orangutan).